We begin with the raw amino-acid sequence, 420 residues long: L-rhamnose isomerase (420 aa).

3 residues coordinate Mn(2+): His-264, Asp-296, and Asp-298.

Belongs to the rhamnose isomerase family. Mn(2+) is required as a cofactor.

It is found in the cytoplasm. It carries out the reaction L-rhamnopyranose = L-rhamnulose. It participates in carbohydrate degradation; L-rhamnose degradation; glycerone phosphate from L-rhamnose: step 1/3. Catalyzes the interconversion of L-rhamnose and L-rhamnulose. This Listeria monocytogenes serotype 4b (strain F2365) protein is L-rhamnose isomerase.